The sequence spans 181 residues: Transcription termination/antitermination protein NusG (181 aa).

Residues 130–161 (PGEMIRVNDGPFADFNGVVEEVDYEKSRLKVS) enclose the KOW domain.

This sequence belongs to the NusG family. In terms of assembly, monomer. Interacts with the transcription termination factor Rho and with RNA polymerase.

Its function is as follows. Participates in transcription elongation, termination and antitermination. In the absence of Rho, increases the rate of transcription elongation by the RNA polymerase (RNAP), probably by partially suppressing pausing. In the presence of Rho, modulates most Rho-dependent termination events by interacting with the RNAP to render the complex more susceptible to the termination activity of Rho. May be required to overcome a kinetic limitation of Rho to function at certain terminators. Also involved in ribosomal RNA transcriptional antitermination. This is Transcription termination/antitermination protein NusG from Buchnera aphidicola subsp. Acyrthosiphon pisum (strain APS) (Acyrthosiphon pisum symbiotic bacterium).